The following is a 273-amino-acid chain: GDNF family receptor alpha-4 (273 aa).

An N-linked (GlcNAc...) asparagine glycan is attached at N192. The GPI-anchor amidated asparagine moiety is linked to residue N250. Positions 251–273 (AGCCFLWVSSMSILTALALQALL) are cleaved as a propeptide — removed in mature form.

This sequence belongs to the GDNFR family. As to quaternary structure, interacts with ARTN ligand and RET: forms a 2:2:2 ternary complex composed of ARTN ligand, GFRA3 and RET receptor. Interacts with SORL1. In terms of tissue distribution, weakly expressed in heart, brain and testis.

The protein localises to the cell membrane. It localises to the secreted. Its function is as follows. Receptor for persephin (PSPN), a growth factor that exhibits neurotrophic activity on mesencephalic dopaminergic and motor neurons. Acts by binding to its coreceptor, GFRA4, leading to autophosphorylation and activation of the RET receptor. May be important in C-cell development and, in the postnatal development of the adrenal medulla. The chain is GDNF family receptor alpha-4 (Gfra4) from Rattus norvegicus (Rat).